The following is a 250-amino-acid chain: 2,3-bisphosphoglycerate-dependent phosphoglycerate mutase (250 aa).

Substrate-binding positions include 8–15 (RHGQSAWN), 21–22 (TG), R60, 87–90 (ERHY), K98, 114–115 (RR), and 183–184 (GN). Residue H9 is the Tele-phosphohistidine intermediate of the active site. E87 serves as the catalytic Proton donor/acceptor.

This sequence belongs to the phosphoglycerate mutase family. BPG-dependent PGAM subfamily. Homodimer.

The catalysed reaction is (2R)-2-phosphoglycerate = (2R)-3-phosphoglycerate. The protein operates within carbohydrate degradation; glycolysis; pyruvate from D-glyceraldehyde 3-phosphate: step 3/5. Catalyzes the interconversion of 2-phosphoglycerate and 3-phosphoglycerate. The polypeptide is 2,3-bisphosphoglycerate-dependent phosphoglycerate mutase (Nitratidesulfovibrio vulgaris (strain ATCC 29579 / DSM 644 / CCUG 34227 / NCIMB 8303 / VKM B-1760 / Hildenborough) (Desulfovibrio vulgaris)).